The following is a 369-amino-acid chain: Protein-glutamate methylesterase/protein-glutamine glutaminase (369 aa).

Residues 6-122 (RAVVADDSHF…SMEMSRLKDQ (117 aa)) enclose the Response regulatory domain. D56 carries the 4-aspartylphosphate modification. Residues 136–178 (GATGSRSGTGSDSGTAPTTAGGSATDRRGTGGSSGQTTYVANP) are disordered. Over residues 138–159 (TGSRSGTGSDSGTAPTTAGGSA) the composition is skewed to low complexity. A CheB-type methylesterase domain is found at 173-367 (TYVANPTLVI…DGVIDTITTE (195 aa)). Catalysis depends on residues S185, H212, and D309.

It belongs to the CheB family. Phosphorylated by CheA. Phosphorylation of the N-terminal regulatory domain activates the methylesterase activity.

It localises to the cytoplasm. The enzyme catalyses [protein]-L-glutamate 5-O-methyl ester + H2O = L-glutamyl-[protein] + methanol + H(+). The catalysed reaction is L-glutaminyl-[protein] + H2O = L-glutamyl-[protein] + NH4(+). Involved in chemotaxis. Part of a chemotaxis signal transduction system that modulates chemotaxis in response to various stimuli. Catalyzes the demethylation of specific methylglutamate residues introduced into the chemoreceptors (methyl-accepting chemotaxis proteins or MCP) by CheR. Also mediates the irreversible deamidation of specific glutamine residues to glutamic acid. The polypeptide is Protein-glutamate methylesterase/protein-glutamine glutaminase (Haloarcula marismortui (strain ATCC 43049 / DSM 3752 / JCM 8966 / VKM B-1809) (Halobacterium marismortui)).